The primary structure comprises 149 residues: MNKGQRHIKIREIITANEIETQDELVDILKKDGYNVTQATVSRDIKELHLVKVPTNNGSYKYSLPADQRFNPLSKLKRSLMDAFVKIDSASHLIVLKTMPGNAQAIGALMDNLDWEEIMGTICGDDTILIICRTHDDTKVVQKKILELL.

Belongs to the ArgR family.

The protein localises to the cytoplasm. It participates in amino-acid biosynthesis; L-arginine biosynthesis [regulation]. It functions in the pathway amino-acid degradation; L-arginine degradation via ADI pathway. In terms of biological role, regulates arginine biosynthesis genes and activates arginine deiminase pathway genes. This Bacillus licheniformis (strain ATCC 14580 / DSM 13 / JCM 2505 / CCUG 7422 / NBRC 12200 / NCIMB 9375 / NCTC 10341 / NRRL NRS-1264 / Gibson 46) protein is Arginine repressor (argR).